The primary structure comprises 418 residues: Type II methyltransferase M.MspI (418 aa).

Residues 105–404 (FKFIDLFSGI…EQISLALKTV (300 aa)) enclose the SAM-dependent MTase C5-type domain. Residue Cys174 is part of the active site.

The protein belongs to the class I-like SAM-binding methyltransferase superfamily. C5-methyltransferase family.

The catalysed reaction is a 2'-deoxycytidine in DNA + S-adenosyl-L-methionine = a 5-methyl-2'-deoxycytidine in DNA + S-adenosyl-L-homocysteine + H(+). A methylase, recognizes the double-stranded sequence 5'-CCGG-3', methylates C-1 on both strands, and protects the DNA from cleavage by the MspI endonuclease. The sequence is that of Type II methyltransferase M.MspI (mspIM) from Moraxella sp.